Here is a 230-residue protein sequence, read N- to C-terminus: Porin OmpL (230 aa).

Residues Met-1–Ala-20 form the signal peptide.

The protein belongs to the oligogalacturonate-specific porin KdgM (TC 1.B.35) family. OmpL subfamily.

Its subcellular location is the cell outer membrane. Outer membrane channel protein that allows an efficient diffusion of low-molecular-weight solutes such as small sugars and tetraglycine. However, the specific substrate recognized by the OmpL channel is unknown. This is Porin OmpL (ompL) from Escherichia coli (strain K12).